Here is a 78-residue protein sequence, read N- to C-terminus: Large ribosomal subunit protein bL28 (78 aa).

Belongs to the bacterial ribosomal protein bL28 family.

The sequence is that of Large ribosomal subunit protein bL28 from Klebsiella pneumoniae (strain 342).